The chain runs to 325 residues: MSWFTPELIEILISVLKAVVILLVVVTCGAFMSFGERRLLGLFQNRYGPNRVGWGGSLQLVADMIKMFFKEDWVPRFSDRAIFTLAPVIAFTSLLLSFAIVPVSPTWAVADLNIGILFFLMMAGLAVYAVLFAGWSSNNKYSLLGAMRASAQTLSYEVFLGLSLMGVVAQAGSFNMQDIVNSQEHVWNVIPQFFGFVTFAIAGVAVCHRHPFDQPEAEQELADGYHIEYSGMKFGLFFVGEYIGIVTVSALIVTLFFGGWQGPFLPPFIWFALKTAFFMVMFILIRASLPRPRYDQVMSFGWKVCLPLTLLNLLATAAVILYNAQ.

Helical transmembrane passes span 11–31 (ILISVLKAVVILLVVVTCGAF), 81–101 (AIFTLAPVIAFTSLLLSFAIV), 114–134 (IGILFFLMMAGLAVYAVLFAG), 154–174 (LSYEVFLGLSLMGVVAQAGSF), 186–206 (VWNVIPQFFGFVTFAIAGVAV), 237–257 (FFVGEYIGIVTVSALIVTLFF), 265–285 (LPPFIWFALKTAFFMVMFILI), and 304–324 (VCLPLTLLNLLATAAVILYNA).

The protein belongs to the complex I subunit 1 family. As to quaternary structure, NDH-1 is composed of 13 different subunits. Subunits NuoA, H, J, K, L, M, N constitute the membrane sector of the complex.

The protein localises to the cell inner membrane. It carries out the reaction a quinone + NADH + 5 H(+)(in) = a quinol + NAD(+) + 4 H(+)(out). Its function is as follows. NDH-1 shuttles electrons from NADH, via FMN and iron-sulfur (Fe-S) centers, to quinones in the respiratory chain. The immediate electron acceptor for the enzyme in this species is believed to be ubiquinone. Couples the redox reaction to proton translocation (for every two electrons transferred, four hydrogen ions are translocated across the cytoplasmic membrane), and thus conserves the redox energy in a proton gradient. This subunit may bind ubiquinone. This Yersinia enterocolitica serotype O:8 / biotype 1B (strain NCTC 13174 / 8081) protein is NADH-quinone oxidoreductase subunit H.